A 59-amino-acid chain; its full sequence is Large ribosomal subunit protein uL30 (59 aa).

It belongs to the universal ribosomal protein uL30 family. In terms of assembly, part of the 50S ribosomal subunit.

The sequence is that of Large ribosomal subunit protein uL30 from Staphylococcus saprophyticus subsp. saprophyticus (strain ATCC 15305 / DSM 20229 / NCIMB 8711 / NCTC 7292 / S-41).